A 342-amino-acid polypeptide reads, in one-letter code: RNA 3'-terminal phosphate cyclase (342 aa).

Residues Gln-103 and 283-287 (YLADQ) contribute to the ATP site. His-308 serves as the catalytic Tele-AMP-histidine intermediate.

This sequence belongs to the RNA 3'-terminal cyclase family. Type 1 subfamily.

It is found in the cytoplasm. It catalyses the reaction a 3'-end 3'-phospho-ribonucleotide-RNA + ATP = a 3'-end 2',3'-cyclophospho-ribonucleotide-RNA + AMP + diphosphate. Its function is as follows. Catalyzes the conversion of 3'-phosphate to a 2',3'-cyclic phosphodiester at the end of RNA. The mechanism of action of the enzyme occurs in 3 steps: (A) adenylation of the enzyme by ATP; (B) transfer of adenylate to an RNA-N3'P to produce RNA-N3'PP5'A; (C) and attack of the adjacent 2'-hydroxyl on the 3'-phosphorus in the diester linkage to produce the cyclic end product. The biological role of this enzyme is unknown but it is likely to function in some aspects of cellular RNA processing. In Shigella dysenteriae serotype 1 (strain Sd197), this protein is RNA 3'-terminal phosphate cyclase.